The primary structure comprises 181 residues: Putative J domain-containing protein R266 (181 aa).

Residues 6–70 form the J domain; that stretch reads NYYQILDVDN…LKRLNYDSYL (65 aa).

This is Putative J domain-containing protein R266 from Acanthamoeba polyphaga (Amoeba).